A 973-amino-acid polypeptide reads, in one-letter code: Nuclear factor NF-kappa-B p105 subunit (973 aa).

Residues 38–245 (ADGPYLQILE…DAIYDSKAPN (208 aa)) enclose the RHD domain. Position 60 is an S-nitrosocysteine; alternate (Cys60). Residue Cys60 is the site of S-(15-deoxy-Delta12,14-prostaglandin J2-9-yl)cysteine; alternate attachment. Residue Lys324 forms a Glycyl lysine isopeptide (Lys-Gly) (interchain with G-Cter in SUMO2) linkage. Residue Ser336 is modified to Phosphoserine. The Nuclear localization signal motif lies at 359-364 (QRKRQK). Positions 371–394 (DSFGGGSGAGAGGGGMFGSGGGGG) are GRR. Residues 434–467 (TINTKFKNEPRDCAKSDDREILNPPEKETQGEGP) form a disordered region. An interaction with CFLAR region spans residues 435-973 (INTKFKNEPR…GQDGPIEGKI (539 aa)). The span at 439–463 (FKNEPRDCAKSDDREILNPPEKETQ) shows a compositional bias: basic and acidic residues. An N6-acetyllysine modification is found at Lys440. Ser449 carries the post-translational modification Phosphoserine. ANK repeat units follow at residues 540–570 (NGDS…SISD), 579–608 (LYQT…DLSL), 612–641 (WGNS…AALL), 648–677 (EGLN…EVNA), 682–711 (SGRT…ALVD), and 716–745 (DGTT…DPLV). An essential for interaction with HIF1AN region spans residues 648–682 (EGLNAIHIAVMSNSLSCLQLLVAAGAEVNAQEQKS). Asn676 carries the post-translational modification (3S)-3-hydroxyasparagine; by HIF1AN. A Phosphoserine modification is found at Ser757. An ANK 7 repeat occupies 769-799 (PGTTPLDMAANWQVFDILNGKPYEPVFTSDD). The Death domain occupies 803–890 (QGDIKQLTED…EAIEVIQAAF (88 aa)). Position 898 is a phosphoserine (Ser898). Ser912 carries the phosphoserine; by GSK3-beta; in vitro modification. Ser928 bears the Phosphoserine mark. Phosphoserine; by IKKB occurs at positions 932 and 937. Ser942 carries the post-translational modification Phosphoserine. At Thr948 the chain carries Phosphothreonine.

Component of the NF-kappa-B p65-p50 complex. Homodimer; component of the NF-kappa-B p50-p50 complex. Component of the NF-kappa-B p105-p50 complex. Component of the NF-kappa-B p50-c-Rel complex. Component of a complex consisting of the NF-kappa-B p50-p50 homodimer and BCL3. Also interacts with MAP3K8. NF-kappa-B p50 subunit interacts with NCOA3 coactivator, which may coactivate NF-kappa-B dependent expression via its histone acetyltransferase activity. Interacts with TSC22D3; this interaction prevents nuclear translocation and DNA-binding. Interacts with SPAG9 and UNC5CL. NFKB1/p105 interacts with CFLAR; the interaction inhibits p105 processing into p50. NFKB1/p105 forms a ternary complex with MAP3K8 and TNIP2. Interacts with GSK3B; the interaction prevents processing of p105 to p50. NFKB1/p50 interacts with NFKBIE. NFKB1/p50 interacts with NFKBIZ. Nuclear factor NF-kappa-B p50 subunit interacts with NFKBID. Directly interacts with MEN1. Interacts with HIF1AN. Interacts with FEM1A; interaction is direct. Post-translationally, generation of the NF-kappa-B p50 (Nuclear factor NF-kappa-B p50 subunit) transcription factor takes place both cotranslationally and post-translationally via non-mutually exclusive mechanisms. A cotranslational processing allows the production of both p50 and p105 (Nuclear factor NF-kappa-B p105 subunit) from a single NFKB1 mRNA. While translation occurs, the particular unfolded structure after the GRR repeat region acts as a substrate for the proteasome, promoting degradation of the C-terminus. The GRR acts as a proteasomal 'stop signal', protecting the region upstream of the GRR from degradation and promoting generation of p50. It is unclear if limited proteasome degradation during cotranslational processing depends on ubiquitination. NF-kappa-B p50 is also generated post-translationally following ubiquitination by the KPC complex, leading to limited processing by the proteasome downstream of the GRR region, thereby generating p50. In terms of processing, phosphorylation at the C-terminus by IKBKB/IKKB acts as a signal for ubiquitination and promotes either complete degradation or processing to generate the NF-kappa-B p50 (Nuclear factor NF-kappa-B p50 subunit). Phosphorylation at Ser-912 primes p105 for proteolytic processing in response to TNF-alpha stimulation. Phosphorylation at Ser-928, Ser-932 and Ser-937 are required for BTRC/BTRCP-mediated ubiquitination and proteolysis. Phosphorylation at Ser-932 is also required for ubiquitination by the KPC complex and limited processing to generate NF-kappa-B p50 (Nuclear factor NF-kappa-B p50 subunit). Polyubiquitinated at multiple Lys residues in the C-terminus. Polyubiquitinated by the SCF(FBXW11) and SCF(BTRC) complexes following phosphorylation at Ser-928, Ser-932 and Ser-937, leading to its complete degradation. In contrast, polyubiquitination by the KPC complex following phosphorylation at Ser-932 leads to limited proteosomal processing and generation of the active NF-kappa-B p50 (Nuclear factor NF-kappa-B p50 subunit). Post-translationally, S-nitrosylation of Cys-60 affects DNA binding. In terms of processing, the covalent modification of cysteine by 15-deoxy-Delta12,14-prostaglandin-J2 is autocatalytic and reversible. It may occur as an alternative to other cysteine modifications, such as S-nitrosylation and S-palmitoylation.

The protein resides in the cytoplasm. It localises to the nucleus. NF-kappa-B is a pleiotropic transcription factor present in almost all cell types and is the endpoint of a series of signal transduction events that are initiated by a vast array of stimuli related to many biological processes such as inflammation, immunity, differentiation, cell growth, tumorigenesis and apoptosis. NF-kappa-B is a homo- or heterodimeric complex formed by the Rel-like domain-containing proteins RELA/p65, RELB, NFKB1/p105, NFKB1/p50, REL and NFKB2/p52 and the heterodimeric p65-p50 complex appears to be most abundant one. The dimers bind at kappa-B sites in the DNA of their target genes and the individual dimers have distinct preferences for different kappa-B sites that they can bind with distinguishable affinity and specificity. Different dimer combinations act as transcriptional activators or repressors, respectively. NF-kappa-B is controlled by various mechanisms of post-translational modification and subcellular compartmentalization as well as by interactions with other cofactors or corepressors. NF-kappa-B complexes are held in the cytoplasm in an inactive state complexed with members of the NF-kappa-B inhibitor (I-kappa-B) family. In a conventional activation pathway, I-kappa-B is phosphorylated by I-kappa-B kinases (IKKs) in response to different activators, subsequently degraded thus liberating the active NF-kappa-B complex which translocates to the nucleus. NF-kappa-B heterodimeric p65-p50 and RelB-p50 complexes are transcriptional activators. The NF-kappa-B p50-p50 homodimer is a transcriptional repressor, but can act as a transcriptional activator when associated with BCL3. NFKB1 appears to have dual functions such as cytoplasmic retention of attached NF-kappa-B proteins by p105 and generation of p50 by a cotranslational processing. The proteasome-mediated process ensures the production of both p50 and p105 and preserves their independent function, although processing of NFKB1/p105 also appears to occur post-translationally. p50 binds to the kappa-B consensus sequence 5'-GGRNNYYCC-3', located in the enhancer region of genes involved in immune response and acute phase reactions. In a complex with MAP3K8, NFKB1/p105 represses MAP3K8-induced MAPK signaling; active MAP3K8 is released by proteasome-dependent degradation of NFKB1/p105. In terms of biological role, P105 is the precursor of the active p50 subunit (Nuclear factor NF-kappa-B p50 subunit) of the nuclear factor NF-kappa-B. Acts as a cytoplasmic retention of attached NF-kappa-B proteins by p105. Functionally, constitutes the active form, which associates with RELA/p65 to form the NF-kappa-B p65-p50 complex to form a transcription factor. Together with RELA/p65, binds to the kappa-B consensus sequence 5'-GGRNNYYCC-3', located in the enhancer region of genes involved in immune response and acute phase reactions. In Rattus norvegicus (Rat), this protein is Nuclear factor NF-kappa-B p105 subunit (Nfkb1).